The sequence spans 841 residues: DNA ligase (841 aa).

NAD(+)-binding positions include 33-37 (DAQYD), 82-83 (SL), and glutamate 114. The active-site N6-AMP-lysine intermediate is lysine 116. NAD(+) is bound by residues arginine 137, glutamate 174, lysine 300, and lysine 324. The Zn(2+) site is built by cysteine 418, cysteine 421, cysteine 436, and cysteine 442. A BRCT domain is found at 758-841 (EKTGPLDGQT…AFLGEHGQQR (84 aa)).

Belongs to the NAD-dependent DNA ligase family. LigA subfamily. Mg(2+) is required as a cofactor. It depends on Mn(2+) as a cofactor.

The catalysed reaction is NAD(+) + (deoxyribonucleotide)n-3'-hydroxyl + 5'-phospho-(deoxyribonucleotide)m = (deoxyribonucleotide)n+m + AMP + beta-nicotinamide D-nucleotide.. Functionally, DNA ligase that catalyzes the formation of phosphodiester linkages between 5'-phosphoryl and 3'-hydroxyl groups in double-stranded DNA using NAD as a coenzyme and as the energy source for the reaction. It is essential for DNA replication and repair of damaged DNA. The polypeptide is DNA ligase (Xanthomonas oryzae pv. oryzae (strain MAFF 311018)).